Here is a 158-residue protein sequence, read N- to C-terminus: Glutathione peroxidase homolog BsaA (158 aa).

Residue threonine 36 is part of the active site.

This sequence belongs to the glutathione peroxidase family.

This chain is Glutathione peroxidase homolog BsaA (bsaA), found in Staphylococcus epidermidis (strain ATCC 35984 / DSM 28319 / BCRC 17069 / CCUG 31568 / BM 3577 / RP62A).